The following is a 214-amino-acid chain: Alkaline phosphatase-like protein (214 aa).

3 helical membrane-spanning segments follow: residues 48–68 (LGII…ALIL), 141–161 (FLIL…CLGA), and 177–197 (YSSV…LIFV).

It belongs to the DedA family.

The protein resides in the cell membrane. The chain is Alkaline phosphatase-like protein (apl) from Lactococcus lactis subsp. lactis (strain IL1403) (Streptococcus lactis).